The following is a 400-amino-acid chain: Phosphoglycerate kinase (400 aa).

Substrate-binding positions include 21-23, arginine 36, 59-62, arginine 118, and arginine 151; these read DFN and HLGR. ATP-binding positions include lysine 201, glycine 293, glutamate 324, and 353-356; that span reads GGDS.

Belongs to the phosphoglycerate kinase family. In terms of assembly, monomer.

The protein localises to the cytoplasm. It catalyses the reaction (2R)-3-phosphoglycerate + ATP = (2R)-3-phospho-glyceroyl phosphate + ADP. Its pathway is carbohydrate degradation; glycolysis; pyruvate from D-glyceraldehyde 3-phosphate: step 2/5. The protein is Phosphoglycerate kinase of Fervidobacterium nodosum (strain ATCC 35602 / DSM 5306 / Rt17-B1).